The primary structure comprises 281 residues: MTGQPSTPVRPGSVVRTVRRHRGGRSATVQDMVAAEMPVAFNYNGVPFAVMMATPEDLEDFALGFSLSEGIVDHPQDLRVVAVDTFLEGASLQIEIPPERAAALDQRRRNLDGRSGCGVCGNESIEAVLRVPPVLQSALRIDVDALARALDALHARQPIAAQTGAVHAAGWADAQGMVQLVREDVGRHNALDKLIGALARARVDATQGFAVVTSRASYEMAMKAAQARIPLLAAISAPTALAISLADSAGLTLIGFARDHDCVVYSHPQRLDLGVAVGEPA.

Cys117 serves as the catalytic Cysteine persulfide intermediate.

Belongs to the FdhD family.

It is found in the cytoplasm. Required for formate dehydrogenase (FDH) activity. Acts as a sulfur carrier protein that transfers sulfur from IscS to the molybdenum cofactor prior to its insertion into FDH. This is Sulfur carrier protein FdhD from Xanthomonas campestris pv. campestris (strain 8004).